A 78-amino-acid polypeptide reads, in one-letter code: Large ribosomal subunit protein bL28 (78 aa).

The protein belongs to the bacterial ribosomal protein bL28 family.

This is Large ribosomal subunit protein bL28 from Corynebacterium aurimucosum (strain ATCC 700975 / DSM 44827 / CIP 107346 / CN-1) (Corynebacterium nigricans).